A 1132-amino-acid chain; its full sequence is MGMACLTMTEMEGTSTSSIYQNGDISGNANSMKQIDPVLLVYLYHSLGKSEADYLTFPSGEYVAEEICIAASKACGITPVYHNMFALMSETERIWYPPNHVFHIDESTRHNVLYRIRFYFPRWYCSGSNRAYRHGISRGAEAPLLDDFVMSYLFAQWRHDFVHGWIKVPVTHETQEECLGMAVLDMMRIAKENDQTPLAIYNSISYKTFLPKCIRAKIQDYHILTRKRIRYRFRRFIQQFSQCKATARNLKLKYLINLETLQSAFYTEKFEVKEPGSGPSGEEIFATIIITGNGGIQWSRGKHKESETLTEQDLQLYCDFPNIIDVSIKQANQEGSNESRVVTIHKQDGKNLEIELSSLREALSFVSLIDGYYRLTADAHHYLCKEVAPPTVLENIQSNCHGPISMDFAISKLKKAGNQTGLYVLRCSPKDFNKYFLTFAVERENVIEYKHCLITKNENEEYNLSGTKKNFSSLKDLLNCYQMETVRSDNIIFQFTKCCPPKPKDKSNLLVFRTNGVSDVPTSPTLQRPTHMNQMVFHKIRNEDLIFNESLGQGTFTKIFKGVRREVGDYGQLHETEVLLKVLDKAHRNYSESFFEAASMMSKLSHKHLVLNYGVCVCGDENILVQEFVKFGSLDTYLKKNKNCINILWKLEVAKQLAWAMHFLEENTLIHGNVCAKNILLIREEDRKTGNPPFIKLSDPGISITVLPKDILQERIPWVPPECIENPKNLNLATDKWSFGTTLWEICSGGDKPLSALDSQRKLQFYEDRHQLPAPKWAELANLINNCMDYEPDFRPSFRAIIRDLNSLFTPDYELLTENDMLPNMRIGALGFSGAFEDRDPTQFEERHLKFLQQLGKGNFGSVEMCRYDPLQDNTGEVVAVKKLQHSTEEHLRDFEREIEILKSLQHDNIVKYKGVCYSAGRRNLKLIMEYLPYGSLRDYLQKHKERIDHKKLLQYTSQICKGMEYLGTKRYIHRDLATRNILVENENRVKIGDFGLTKVLPQDKEYYKVKEPGESPIFWYAPESLTESKFSVASDVWSFGVVLYELFTYIEKSKSPPAEFMRMIGNDKQGQMIVFHLIELLKNNGRLPRPDGCPDEIYMIMTECWNNNVNQRPSFRDLALRVDQIRDNMAG.

The segment at 1–239 (MGMACLTMTE…RYRFRRFIQQ (239 aa)) is interaction with cytokine/interferon/growth hormone receptors. The 344-residue stretch at 37–380 (PVLLVYLYHS…GYYRLTADAH (344 aa)) folds into the FERM domain. Y119 carries the post-translational modification Phosphotyrosine; by autocatalysis. A phosphotyrosine mark is found at Y372 and Y373. An SH2; atypical domain is found at 401-482 (HGPISMDFAI…SLKDLLNCYQ (82 aa)). S523 is subject to Phosphoserine. A Protein kinase 1 domain is found at 545 to 809 (LIFNESLGQG…AIIRDLNSLF (265 aa)). Phosphotyrosine occurs at positions 570 and 813. One can recognise a Protein kinase 2 domain in the interval 849–1126 (LKFLQQLGKG…RDLALRVDQI (278 aa)). An ATP-binding site is contributed by 855–863 (LGKGNFGSV). Y868 carries the phosphotyrosine; by autocatalysis modification. An ATP-binding site is contributed by K882. Residues Y966 and Y972 each carry the phosphotyrosine; by autocatalysis modification. Residue D976 is the Proton acceptor of the active site. Phosphotyrosine; by autocatalysis occurs at positions 1007 and 1008.

Belongs to the protein kinase superfamily. Tyr protein kinase family. JAK subfamily. Interacts with IL23R, SKB1 and STAM2. Interacts with EPOR. Interacts with LYN. Interacts with SIRPA. Interacts with SH2B1. Interacts with TEC. Interacts with IFNGR2 (via intracellular domain). Interacts with LEPR (Isoform B). Interacts with HSP90AB1; promotes functional activation in a heat shock-dependent manner. Interacts with STRA6. Interacts with RHEX; this interaction occurs in a erythropoietin (EPO)-dependent manner. Interacts with ASB2; the interaction targets JAK2 for Notch-induced proteasomal degradation. Mg(2+) is required as a cofactor. In terms of processing, autophosphorylated, leading to regulate its activity. Leptin promotes phosphorylation on tyrosine residues, including phosphorylation on Tyr-813. Autophosphorylation on Tyr-119 in response to EPO down-regulates its kinase activity. Autophosphorylation on Tyr-868, Tyr-966 and Tyr-972 in response to growth hormone (GH) are required for maximal kinase activity. Also phosphorylated by TEC. Phosphorylated on tyrosine residues in response to interferon gamma signaling. Phosphorylated on tyrosine residues in response to a signaling cascade that is activated by increased cellular retinol. Undergoes Notch-induced ubiquitination and subsequent proteasomal degradation which is mediated by ASB1 or ASB2, the substrate-recognition components of probable ECS E3 ubiquitin-protein ligase complexes.

The protein resides in the endomembrane system. It localises to the cytoplasm. It is found in the nucleus. The catalysed reaction is L-tyrosyl-[protein] + ATP = O-phospho-L-tyrosyl-[protein] + ADP + H(+). Regulated by autophosphorylation, can both activate or decrease activity. Heme regulates its activity by enhancing the phosphorylation on Tyr-1007 and Tyr-1008. In terms of biological role, non-receptor tyrosine kinase involved in various processes such as cell growth, development, differentiation or histone modifications. Mediates essential signaling events in both innate and adaptive immunity. In the cytoplasm, plays a pivotal role in signal transduction via its association with type I receptors such as growth hormone (GHR), prolactin (PRLR), leptin (LEPR), erythropoietin (EPOR), thrombopoietin (THPO); or type II receptors including IFN-alpha, IFN-beta, IFN-gamma and multiple interleukins. Following ligand-binding to cell surface receptors, phosphorylates specific tyrosine residues on the cytoplasmic tails of the receptor, creating docking sites for STATs proteins. Subsequently, phosphorylates the STATs proteins once they are recruited to the receptor. Phosphorylated STATs then form homodimer or heterodimers and translocate to the nucleus to activate gene transcription. For example, cell stimulation with erythropoietin (EPO) during erythropoiesis leads to JAK2 autophosphorylation, activation, and its association with erythropoietin receptor (EPOR) that becomes phosphorylated in its cytoplasmic domain. Then, STAT5 (STAT5A or STAT5B) is recruited, phosphorylated and activated by JAK2. Once activated, dimerized STAT5 translocates into the nucleus and promotes the transcription of several essential genes involved in the modulation of erythropoiesis. Part of a signaling cascade that is activated by increased cellular retinol and that leads to the activation of STAT5 (STAT5A or STAT5B). In addition, JAK2 mediates angiotensin-2-induced ARHGEF1 phosphorylation. Plays a role in cell cycle by phosphorylating CDKN1B. Cooperates with TEC through reciprocal phosphorylation to mediate cytokine-driven activation of FOS transcription. In the nucleus, plays a key role in chromatin by specifically mediating phosphorylation of 'Tyr-41' of histone H3 (H3Y41ph), a specific tag that promotes exclusion of CBX5 (HP1 alpha) from chromatin. Up-regulates the potassium voltage-gated channel activity of KCNA3. In Pongo abelii (Sumatran orangutan), this protein is Tyrosine-protein kinase JAK2.